Reading from the N-terminus, the 206-residue chain is Ras-related protein ralB-A (206 aa).

Position 21-28 (21-28 (GSGGVGKS)) interacts with GTP. Positions 43–51 (YEPTKADSY) match the Effector region motif. Residues 68-72 (DTAGQ) and 128-131 (NKSD) contribute to the GTP site. Residues 180–189 (KMSENKDKNG) are compositionally biased toward basic and acidic residues. Positions 180-206 (KMSENKDKNGKKSGKSKKGFKQRCCLL) are disordered. Basic residues predominate over residues 190 to 200 (KKSGKSKKGFK). Cysteine methyl ester is present on Cys203. Cys203 carries the S-geranylgeranyl cysteine lipid modification. Positions 204 to 206 (CLL) are cleaved as a propeptide — removed in mature form.

This sequence belongs to the small GTPase superfamily. Ras family. In terms of assembly, interacts with ralbp1 and rap1gds1. Weakly expressed in adult tissues and highest levels were found in heart, brain and testes.

It is found in the cell membrane. It localises to the midbody. The enzyme catalyses GTP + H2O = GDP + phosphate + H(+). In terms of biological role, multifunctional GTPase involved in a variety of cellular processes including gene expression, cell migration, cell proliferation, oncogenic transformation and membrane trafficking. Accomplishes its multiple functions by interacting with distinct downstream effectors. Acts as a GTP sensor for GTP-dependent exocytosis of dense core vesicles. Required both to stabilize the assembly of the exocyst complex and to localize functional exocyst complexes to the leading edge of migrating cells. Required for suppression of apoptosis. In late stages of cytokinesis, upon completion of the bridge formation between dividing cells, mediates exocyst recruitment to the midbody to drive abscission. Regulates the actin cytoskeleton to play a role in gastrulation or neurulation. During the cleavage stages, the GTP-bound form induces a cortical reaction that affects the localization of pigment granules. Activated by the FGF pathway via ras and ral-GDS, but independently of raf. Directs ralbp1 to the plasma membrane. Involved in ligand-dependent receptor mediated endocytosis of the EGF and insulin receptors. The chain is Ras-related protein ralB-A (ralb-a) from Xenopus laevis (African clawed frog).